Consider the following 823-residue polypeptide: Putative ankyrin repeat domain-containing protein 20A4 (823 aa).

ANK repeat units lie at residues 66–95 (QHRT…QIDV), 99–128 (ENRT…NPNL), 132–161 (YGNT…HIEA), 165–194 (DNNT…SSHA), and 198–227 (LRRS…DVFA). Disordered stretches follow at residues 301-343 (VPEK…EVED) and 356-405 (QTLR…NICD). A compositionally biased stretch (basic and acidic residues) spans 371–384 (EQQRHERSEKKQPQ). Coiled coils occupy residues 431-480 (KKLK…KQLE), 565-724 (EMIT…NNST), and 776-806 (FVLE…KTEV).

This chain is Putative ankyrin repeat domain-containing protein 20A4, found in Homo sapiens (Human).